Reading from the N-terminus, the 414-residue chain is L-cysteine:1D-myo-inositol 2-amino-2-deoxy-alpha-D-glucopyranoside ligase (414 aa).

The tract at residues 1-38 is disordered; sequence MRSWPAPEVPNLPEAGLPGPALPLHLHDTATGTVRPTR. Residues 11–38 show a composition bias toward low complexity; that stretch reads NLPEAGLPGPALPLHLHDTATGTVRPTR. C48 lines the Zn(2+) pocket. L-cysteinyl-5'-AMP is bound by residues 48–51, T63, and 86–88; these read CGIT and NVT. The short motif at 50 to 60 is the 'HIGH' region element; that stretch reads ITPYDATHLGH. A 'ERGGDP' region motif is present at residues 188–193; the sequence is ERGGDP. W228 lines the L-cysteinyl-5'-AMP pocket. C232 serves as a coordination point for Zn(2+). Residue 250 to 252 coordinates L-cysteinyl-5'-AMP; sequence GSD. H257 contacts Zn(2+). V284 is a binding site for L-cysteinyl-5'-AMP. A 'KMSKS' region motif is present at residues 290 to 294; sequence KMSKS.

The protein belongs to the class-I aminoacyl-tRNA synthetase family. MshC subfamily. As to quaternary structure, monomer. The cofactor is Zn(2+).

The catalysed reaction is 1D-myo-inositol 2-amino-2-deoxy-alpha-D-glucopyranoside + L-cysteine + ATP = 1D-myo-inositol 2-(L-cysteinylamino)-2-deoxy-alpha-D-glucopyranoside + AMP + diphosphate + H(+). Functionally, catalyzes the ATP-dependent condensation of GlcN-Ins and L-cysteine to form L-Cys-GlcN-Ins. In Thermomonospora curvata (strain ATCC 19995 / DSM 43183 / JCM 3096 / KCTC 9072 / NBRC 15933 / NCIMB 10081 / Henssen B9), this protein is L-cysteine:1D-myo-inositol 2-amino-2-deoxy-alpha-D-glucopyranoside ligase.